Here is a 5005-residue protein sequence, read N- to C-terminus: MDQRKNESIVPSITQLEDFLTEHNSNVVWLLVATILSCGWIIYLTYYNSRNVGLILTLVLNRLYKHGYIHIGSFSFSVLSGKVMVREIYYITEDMSIRIQDGFIIFRWWKMYNPKQKQHDPKAETRLYITVNDFEFHVYNRSDLYGRLQELFGLEPTIIPPKKDDDKTREIGRTRTQSKIERVKVKTESQDPTSSWRSLIPVIKVNVSTGRLAFGNHYQPQTLCINFDDAFLTYTTKPPSSHLDQFMHIVKGKLENVRVMLVPSPRYVGLQNDEPPRLMGEGFVVMQSNDVDIYYYMDEPGLVPEETEENIEGEMSSEDCKLQDLPPCWGLDIVCGKGTDFNYGPWADRQRDCLWKFFFPPDYQVLKVSEIAQPGRPRQILAFELRMNIIADATIDLLFTKNRETNAVHVNVGAGSYLEINIPMTVEENGYTPAIKGQLLHVDATTSMQYRTLLEAEMLAFHINASYPRIWNMPQTWQCELEVYKATYHFIFAQKNFFTDLIQDWSSDSPPDIFSFVPYTWNFKIMFHQFEMIWAANQHNWIDCSTKQQENVYLAACGETLNIDFSLPFTDFVPATCNTKFSLRGEDVDLHLFLPDCHPSKYSLFMLVKNCHPNKMIHDTGIPAECQSGQKTVKPKWRNVTQEKSGWVECWTVPSVMLTIDYTWHPIYPQKADEQLKQSLSEMEETMLSVLRPSQKTSDRVVSSPSTSSRPPIDPSELPPDKLHVEMELSPDSQITLYGPLLNAFLCIKENYFGEDDMYMDFEEVISSPVLSLSTSSSSGWTAVGMENDKKENEGSAKSIHPLALRPWDITVLVNLYKVHGRLPVHGTTDGPECPTAFLERLCFEMKKGFRETMLQLILSPLNVFVSDNYQQRPPVDEVLREGHINLSGLQLRAHAMFSAEGLPLGSDSLEYAWLIDVQAGSLTAKVTAPQLACLLEWGQTFVFHVVCREYELERPKSVIICQHGIDRRFCESKLSCIPGPCPTSDDLKYTMIRLAVDGADIYIVEHGCATNIKMGAIRVANCNLHNQSVGEGISAAIQDFQVRQYIEQLNNCRIGLQPAVLRRAYWLEAGSANLGLITVDIALAADHHSKHEAQRHFLETHDARTKRLWFLWPDDILKNKRCRNKCGCLGGCRFFGGTVTGLDFFKLEELTPSSSSAFSSTSAESDMYYGQSLLQPGEWIITKEIPKIIDGNVNGMKRKEWENKSVGIEVERKTQHLSLQVPLRSHSSSSSSEENSSSSAAQPLLAGEKESPSSVADDHLVQKEFLHGTKRDDGQASIPTEISGNSPVSPNTQDKSVGQSPLRSPLKRQASVCSTRLGSTKSLTAAFYGDKQPVTVGVQFSSDVSRSDENVLDSPKQRRSFGSFPYTPSADSNSFHQYRSMDSSMSMADSEAYFSAAEEFEPISSDEGPGTYPGRKKKKKQTQQIDYSRGSIYHSVEGPLTGHGESIQDSRTLPFKTHPSQASFVSALGGEDDVIEHLYIVEGEKTVESEQITPQQPVMNCYQTYLTQFQVINWSVKHPTNKRTSKSSLHRPLDLDTPTSEESSSSFEQLSVPTFKVIKQGLTANSLLDRGMQLSGSTSNTPYTPLEKKLADNTDDETLTEEWTLDQPVSQTRTTAIVEVKGTVDIVLTPLVAEALDRYIEAMVHCASTRHPAAIVDDLHAKVLREAVQNSKTTFSENLSSKQDIRGTKTEQSTIGTTNQGQAQTNLTMKQDNVTIKGLQTNVSIPKVNLCLLQASVEESPTTAPSRSVTHVSLVALCFDRIATQVRMNRGVVEETSNNAEPGRTSNFDRYVHATKMQPQSSGSLRSNAGAEKGKEIAAKLNIHRVHGQLRGLDTTDIGTCAITAIPFEKSKVLFTLEELDEFTFVDETDQQAVPDVTRIGPSQEKWGWIMFECGLENLTIKGGRQSGAVLYNSFGIMGKASDTERGGVLTSNNSSDSPTGSGYNTDVSDDNLPCDRTSPSSDLNGNSVSDEQDEGVESDDLKKDLPLMPPPPDSCSMKLTIKEIWFSFAAPTNVRSHTHAFSRQLNLLSTATPAVGAWLVPIDQLKSSLNKLETEGTLRICAVMGCIMTEALENKSVHFPLRSKYNRLTKVARFLQENPSCLLCNILHHYLHQANYSIIDDATMSDGLPALVTLKKGLVALARQWMKFIVVTPAFKGVSLHRPAQPLKPQIAMDHEHEDGLGLDNGGGLQSDTSADGAEFEFDAATVSEHTMLLEGTANRPPPGSSGPVTGAEIMRKLSKTHTHSDSALKIKGIHPYHSLSYTSGDTATDSPVHVGRAGMPVKDSPRKESLLSYLTGSFPSLHNLLEGTPQRSSAAVKSSSLTRTGNTVATDMLSEHPLLSEPSSVSFYNWMSNAVGNRGSVLQESPVTKSGHNSLPTGVAPNLPTIPSASDFNTVLSSDQNTLDGTHSQHSTSQDDVAGVEEANQGFPAVQLADAQVVFKPLLSHTGIQSQDTMPFCYRMYFGEHLSFSGTLDCLRADIVDSDTAKERKGKRARRQGHVNLPPLEFKPALMLGTFSISAVVMEKSVCTPQNSTSALSFHDLSKRYYNTFHCNFTISCQSISQHVDMALVRLIHQFSTMIDDIKATQTDIKLSRYTAGSASPTPTFKTRKHRDFRSSDFSRSSRGSLNGGNRVNNAKNKRTNNENNKKESRNKNSLGRSERRTSKVSRKGSKDVVDHMTIHMDDSDSITVSEQSEPSAECWQNMYKLLNFYSLISDPTGILEKSSETFGPAGVRSPTEPTCKVVFENEQDNSSLTKTQRKRSLVTSEPQHVTLIVFGIGMVNRTHLEADIGGLTMESELKRIHGSFTLKEKMKDVLHQKMTETCATAHIGGVNIVLLEGITPNIQLEDFPTSPTSTAKQEFLTVVKCSIAKSQALYSAQRGLKTNNAAVFKVGAISINIPQHPATLHSMMVRSSHQLSKQISDLIRQPSTAPQPVKEDIATPLPSEKTPTSVNQTPVETNEFPQLPEGLEKKPIVLKFSAMLDGIAIGAALLPSLKAEYKMGRMRSHGMTGAQTRFTFELPNHRLRFTSKVSATDMSTIPPSASLNLPPVTMSGKYIMEEHDSYSDQVWSIDELPSKQGYYLQGNYLRCVAEVGSFEHNLTTDLLNHLVFVQKVFMKEVNEVIQKVSGGEQPIPLWNEHDGTADGDKPKILLYSLNLQFKGIQVTATTPSMRAVRFETGLIELELSNRLQTKASPGSSSYLKLFGKCQVDLNLALGQIVKHQVYEEAGSDFHQVAYFKTRIGLRNALREEISGSSDREAVLITLNRPIVYAQPVAFDRAVLFWLNYKAAYDNWNEQRMALHKDIHMATKEVVDMLPGIQQTSAQAFGTLFLQLTVNDLGICLPITNTAQSNHTGDLDTGSALVLTIESTLITACSSESLVSKGHFKNFCIRFADGFETSWDDWKPEIHGDLVMNACVVPDGTYEVCSRTTGQAAAESSSAGTWTLNVLWKMCGIDVHMDPNIGKRLNALGNTLTTLTGEEDIDDIADLNSVNIADLSDEDEVDTMSPTIHTEATDYRRQAASASQPGELRGRKIMKRIVDIRELNEQAKVIDDLKKLGASEGTINQEIQRYQQLESVAVNDIRRDVRKKLRRSSMRAASLKDKWGLSYKPSYSRSKSISASGRPPLKRMERASSRVGETEELPEIRVDAASPGPRVTFNIQDTFPEETELDLLSVTIEGPSHYSSNSEGSCSVFSSPKTPGGFSPGIPFQTEEGRRDDSLSSTSEDSEKDEKDEDHERERFYIYRKPSHTSRKKATGFAAVHQLFTERWPTTPVNRSLSGTATERNIDFELDIRVEIDSGKCVLHPTTLLQEHDDISLRRSYDRSSRSLDQDSPSKKKKFQTNYASTTHLMTGKKVPSSLQTKPSDLETTVFYIPGVDVKLHYNSKTLKTESPNASRGSSLPRTLSKESKLYGMKDSATSPPSPPLPSTVQSKTNTLLPPQPPPIPAAKGKGSGGVKTAKLYAWVALQSLPEEMVISPCLLDFLEKALETIPITPVERNYTAVSSQDEDMGHFEIPDPMEESTTSLVSSSTSAYSSFPVDVVVYVRVQPSQIKFSCLPVSRVECMLKLPSLDLVFSSNRGELETLGTTYPAETLSPGGNATQSGTKTSASKTGIPGSSGLGSPLGRSRHSSSQSDLTSSSSSSSGLSFTACMSDFSLYVFHPYGAGKQKTAVSGLTPGSGGLGNVDEEPTSVTGRKDSLSINLEFVKVSLSRIRRSGGASFFESQSVSKSASKMDTTLINISAVCDIGSASFKYDMRRLSEILAFPRAWYRRSIARRLFLGDQTINLPTSGPGTPDSIEGVSQHLSPESSRKAYCKTWEQPSQSASFTHMPQSPNVFNEHMTNSTMSPGTVGQSLKSPASIRSRSVSDSSVPRRDSLSKTSTPFNKSNKAASQQGTPWETLVVFAINLKQLNVQMNMSNVMGNTTWTTSGLKSQGRLSVGSNRDREISMSVGLGRSQLDSKGGVVGGTIDVNALEMVAHISEHPNQQPSHKIQITMGSTEARVDYMGSSILMGIFSNADLKLQDEWKVNLYNTLDSSITDKSEIFVHGDLKWDIFQVMISRSTTPDLIKIGMKLQEFFTQQFDTSKRALSTWGPVPYLPPKTMTSNLEKSSQEQLLDAAHHRHWPGVLKVVSGCHISLFQIPLPEDGMQFGGSMSLHGNHMTLACFHGPNFRSKSWALFHLEEPNIAFWTEAQKIWEDGSSDHSTYIVQTLDFHLGHNTMVTKPCGALESPMATITKITRRRHENPPHGVASVKEWFNYVTATRNEELNLLRNVDANNTENSTTVKNSSLLSGFRGGSSYNHETETIFALPRMQLDFKSIHVQEPQEPSLQDASLKPKVECSVVTEFTDHICVTMDAELIMFLHDLVSAYLKEKEKAIFPPRILSTRPGQKSPIIIHDDNSSDKDREDSITYTTVDWRDFMCNTWHLEPTLRLISWTGRKIDPVGVDYILQKLGFHHARTTIPKWLQRGVMDPLDKVLSVLIKKLGTALQDEKEKKGKDKEEH.

Residues 26 to 46 (NVVWLLVATILSCGWIIYLTY) form a helical membrane-spanning segment. Disordered regions lie at residues 691-721 (LRPS…LPPD), 1218-1257 (LSLQ…SSVA), and 1269-1310 (GTKR…LKRQ). Composition is skewed to low complexity over residues 700–711 (RVVSSPSTSSRP) and 1226–1240 (SHSS…SSSS). The segment covering 1248 to 1257 (GEKESPSSVA) has biased composition (basic and acidic residues). The segment covering 1278–1303 (SIPTEISGNSPVSPNTQDKSVGQSPL) has biased composition (polar residues). Phosphoserine is present on residues Ser1301, Ser1305, and Ser1323. Thr1325 bears the Phosphothreonine mark. Disordered regions lie at residues 1343 to 1376 (SDVS…SNSF), 1400 to 1427 (EFEP…QQID), 1521 to 1548 (TNKR…SSSF), and 1676 to 1704 (FSEN…QGQA). 2 positions are modified to phosphoserine: Ser1355 and Ser1406. The segment covering 1521–1530 (TNKRTSKSSL) has biased composition (basic residues). A compositionally biased stretch (polar residues) spans 1691–1704 (TEQSTIGTTNQGQA). A phosphoserine mark is found at Ser1805 and Ser1808. 3 disordered regions span residues 1924 to 1991 (DTER…PLMP), 2401 to 2420 (SDQN…QDDV), and 2598 to 2677 (TAGS…KDVV). 4 stretches are compositionally biased toward polar residues: residues 1931-1948 (LTSN…YNTD), 1959-1971 (TSPS…NSVS), 2401-2418 (SDQN…TSQD), and 2598-2608 (TAGSASPTPTF). Ser2601 and Ser2603 each carry phosphoserine. A compositionally biased stretch (low complexity) spans 2619–2638 (SDFSRSSRGSLNGGNRVNNA). Positions 2643 to 2665 (TNNENNKKESRNKNSLGRSERRT) are enriched in basic and acidic residues. Ser2755 bears the Phosphoserine mark. Residues 2928 to 2967 (RQPSTAPQPVKEDIATPLPSEKTPTSVNQTPVETNEFPQL) form a disordered region. Over residues 2949–2964 (KTPTSVNQTPVETNEF) the composition is skewed to polar residues. Position 3562 is a phosphoserine (Ser3562). The span at 3612 to 3622 (PSYSRSKSISA) shows a compositional bias: polar residues. Disordered regions lie at residues 3612-3661 (PSYS…VTFN), 3686-3744 (SSNS…ERFY), 3821-3843 (RRSY…KKFQ), 3914-3954 (YGMK…KGKG), 4088-4146 (GTTY…SSSS), and 4325-4394 (QSAS…KAAS). A Phosphoserine modification is found at Ser3653. The span at 3686 to 3700 (SSNSEGSCSVFSSPK) shows a compositional bias: polar residues. Over residues 3727-3736 (EDSEKDEKDE) the composition is skewed to acidic residues. Over residues 3821-3837 (RRSYDRSSRSLDQDSPS) the composition is skewed to basic and acidic residues. 2 stretches are compositionally biased toward polar residues: residues 3931–3940 (TVQSKTNTLL) and 4098–4113 (PGGN…SASK). Over residues 4122–4146 (LGSPLGRSRHSSSQSDLTSSSSSSS) the composition is skewed to low complexity. Ser4124 bears the Phosphoserine mark. Residues 4325–4358 (QSASFTHMPQSPNVFNEHMTNSTMSPGTVGQSLK) are compositionally biased toward polar residues. Low complexity predominate over residues 4359–4372 (SPASIRSRSVSDSS). Positions 4381–4394 (KTSTPFNKSNKAAS) are enriched in polar residues.

In terms of tissue distribution, highly expressed in testis and ovary. Weakly or not expressed in other tissues.

It localises to the cell membrane. Its subcellular location is the endoplasmic reticulum membrane. The protein resides in the mitochondrion membrane. Tube-forming lipid transport protein which provides phosphatidylethanolamine for glycosylphosphatidylinositol (GPI) anchor synthesis in the endoplasmic reticulum. Plays a role in endosomal trafficking and endosome recycling. Also involved in the actin cytoskeleton and cilia structural dynamics. Acts as a regulator of phagocytosis. The sequence is that of Bridge-like lipid transfer protein family member 1 from Homo sapiens (Human).